The sequence spans 94 residues: Acylphosphatase (94 aa).

An Acylphosphatase-like domain is found at 8-94 (RLTAWVHGRV…REQITGFHER (87 aa)). Active-site residues include Arg23 and Asn41.

Belongs to the acylphosphatase family.

The enzyme catalyses an acyl phosphate + H2O = a carboxylate + phosphate + H(+). This Mycobacterium sp. (strain KMS) protein is Acylphosphatase (acyP).